A 399-amino-acid chain; its full sequence is Formaldehyde dismutase (399 aa).

Cys46 is a binding site for Zn(2+). An NAD(+)-binding site is contributed by 47–51; the sequence is GSDQH. Zn(2+) contacts are provided by His67, Cys97, Cys100, Cys103, Cys111, and Asp170. Thr174 is an NAD(+) binding site. His177 is a binding site for Zn(2+). Residues 197–198, 218–219, Arg223, Val263, His268, Pro299, 299–301, and 336–338 contribute to the NAD(+) site; these read PV, DQ, PGI, and GMA.

It belongs to the zinc-containing alcohol dehydrogenase family. As to quaternary structure, homotetramer. Zn(2+) serves as cofactor. Requires NAD(+) as cofactor. The cofactor is NADH.

The catalysed reaction is 2 formaldehyde + H2O = methanol + formate + H(+). Inhibited by the substrate analog pyrazole but not by NAD analogs such as AMP, ADP, ATP or N-methylnicotinamide chloride. Active against a range of primary alcohols as well as some secondary alcohols. Exhibits higher activity against alcohols with longer carbon chains. In Pseudomonas putida (Arthrobacter siderocapsulatus), this protein is Formaldehyde dismutase.